A 122-amino-acid polypeptide reads, in one-letter code: Serum amyloid A-1 protein (122 aa).

The signal sequence occupies residues 1–18 (MKLLTGLVFCSLVLGVSS). The important for amyloid formation; forms amyloid fibrils in vitro stretch occupies residues 19 to 45 (RSFFSFLGEAFDGARDMWRAYSDMREA). Positions 95–122 (LADQAANEWGRSGKDPNHFRPAGLPEKY) are cleaved as a propeptide — often cleaved during amyloidogenesis. Residues 98 to 122 (QAANEWGRSGKDPNHFRPAGLPEKY) are disordered. The residue at position 101 (Asn-101) is an N4,N4-dimethylasparagine.

Belongs to the SAA family. As to quaternary structure, homohexamer; dimer of trimers. Can form amyloid fibrils after partial proteolysis; the native, undenatured protein does not form amyloid fibrils (in vitro). Apolipoprotein of the HDL complex. Binds to heparin. Post-translationally, this protein is the precursor of amyloid protein A, which is formed by the removal of approximately 24 residues from the C-terminal end. Expressed by the liver; secreted in plasma (at protein level).

The protein resides in the secreted. Functionally, major acute phase protein. This chain is Serum amyloid A-1 protein (SAA1), found in Homo sapiens (Human).